Consider the following 253-residue polypeptide: 5'/3'-nucleotidase SurE (253 aa).

The a divalent metal cation site is built by D8, D9, S39, and N92.

The protein belongs to the SurE nucleotidase family. The cofactor is a divalent metal cation.

The protein resides in the cytoplasm. It carries out the reaction a ribonucleoside 5'-phosphate + H2O = a ribonucleoside + phosphate. The enzyme catalyses a ribonucleoside 3'-phosphate + H2O = a ribonucleoside + phosphate. The catalysed reaction is [phosphate](n) + H2O = [phosphate](n-1) + phosphate + H(+). Nucleotidase with a broad substrate specificity as it can dephosphorylate various ribo- and deoxyribonucleoside 5'-monophosphates and ribonucleoside 3'-monophosphates with highest affinity to 3'-AMP. Also hydrolyzes polyphosphate (exopolyphosphatase activity) with the preference for short-chain-length substrates (P20-25). Might be involved in the regulation of dNTP and NTP pools, and in the turnover of 3'-mononucleotides produced by numerous intracellular RNases (T1, T2, and F) during the degradation of various RNAs. The polypeptide is 5'/3'-nucleotidase SurE (Klebsiella pneumoniae (strain 342)).